The chain runs to 149 residues: 3-dehydroquinate dehydratase (149 aa).

The active-site Proton acceptor is the tyrosine 26. Substrate contacts are provided by asparagine 77, histidine 83, and aspartate 90. Residue histidine 103 is the Proton donor of the active site. Substrate contacts are provided by residues 104 to 105 (LS) and arginine 114.

It belongs to the type-II 3-dehydroquinase family. Homododecamer.

It catalyses the reaction 3-dehydroquinate = 3-dehydroshikimate + H2O. Its pathway is metabolic intermediate biosynthesis; chorismate biosynthesis; chorismate from D-erythrose 4-phosphate and phosphoenolpyruvate: step 3/7. Functionally, catalyzes a trans-dehydration via an enolate intermediate. The protein is 3-dehydroquinate dehydratase of Haemophilus influenzae (strain PittEE).